The sequence spans 215 residues: MKYQLTALEARVIGCLLEKQVTTPEQYPLSVNGVVTACNQKTNREPVMNLSESEVQEQLDNLVKRHYLRTVSGFGNRVTKYEQRFCNSEFGDLKLSAAEVALITTLLLRGAQTPGELRSRAARMYEFSDMAEVELTLEQLANREDGPFVVRLAREPGKRESRYMHLFSGEVEDQPAVTDMSNAVDGDLQARVEALEIEVAELKQRLDSLLAHLGD.

Position 80 is an N6-acetyllysine (Lys-80).

Belongs to the UPF0502 family.

The sequence is that of UPF0502 protein YceH from Escherichia coli O157:H7.